Reading from the N-terminus, the 87-residue chain is X protein (87 aa).

The interval 5–16 (LRLTLLELVRRL) is nuclear export signal. The interval 18–87 (GNATIESGRL…PANRKGAAVE (70 aa)) is disordered. Over residues 36 to 48 (DTTTGTTGVTKTT) the composition is skewed to low complexity.

As to quaternary structure, interacts with P and N proteins. These interactions presumably promote nuclear targeting of the X protein in infected cells. Interacts with host MAVS; this interaction inhibits MAVS-induced apoptosis. In terms of processing, phosphorylated.

It is found in the host nucleus. The protein localises to the host mitochondrion. Its function is as follows. Plays an essential role in the inhibition of host apoptosis. Mediates host mitochondria-mediated apoptosis through interaction with the mitochondrial antiviral signaling protein/MAVS and thereby promotes viral persistence in host central nervous system. Within the host nucleus, regulates viral RNA synthesis and polymerase complex assembly. The sequence is that of X protein (P/X) from Borna disease virus 1 (BoDV-1).